Here is a 401-residue protein sequence, read N- to C-terminus: Anhydro-N-acetylmuramic acid kinase (401 aa).

25–32 (GTSLDGLD) is an ATP binding site.

It belongs to the anhydro-N-acetylmuramic acid kinase family.

It carries out the reaction 1,6-anhydro-N-acetyl-beta-muramate + ATP + H2O = N-acetyl-D-muramate 6-phosphate + ADP + H(+). Its pathway is amino-sugar metabolism; 1,6-anhydro-N-acetylmuramate degradation. It functions in the pathway cell wall biogenesis; peptidoglycan recycling. Catalyzes the specific phosphorylation of 1,6-anhydro-N-acetylmuramic acid (anhMurNAc) with the simultaneous cleavage of the 1,6-anhydro ring, generating MurNAc-6-P. Is required for the utilization of anhMurNAc either imported from the medium or derived from its own cell wall murein, and thus plays a role in cell wall recycling. This is Anhydro-N-acetylmuramic acid kinase from Pseudoalteromonas translucida (strain TAC 125).